The primary structure comprises 174 residues: Peptide methionine sulfoxide reductase MsrA (174 aa).

Residue Cys11 is part of the active site.

This sequence belongs to the MsrA Met sulfoxide reductase family.

The enzyme catalyses L-methionyl-[protein] + [thioredoxin]-disulfide + H2O = L-methionyl-(S)-S-oxide-[protein] + [thioredoxin]-dithiol. It catalyses the reaction [thioredoxin]-disulfide + L-methionine + H2O = L-methionine (S)-S-oxide + [thioredoxin]-dithiol. Has an important function as a repair enzyme for proteins that have been inactivated by oxidation. Catalyzes the reversible oxidation-reduction of methionine sulfoxide in proteins to methionine. The polypeptide is Peptide methionine sulfoxide reductase MsrA (Nitratiruptor sp. (strain SB155-2)).